The chain runs to 454 residues: Bifunctional protein GlmU (454 aa).

The pyrophosphorylase stretch occupies residues 1–226; that stretch reads MALNVVILAA…AIEVEGANNR (226 aa). Residues 8–11, K22, Q73, 78–79, 100–102, G137, E151, N166, and N224 contribute to the UDP-N-acetyl-alpha-D-glucosamine site; these read LAAG, GT, and YGD. A Mg(2+)-binding site is contributed by D102. Residue N224 participates in Mg(2+) binding. The segment at 227-247 is linker; it reads VQLAQLERAYQAREAEKLMIA. Residues 248–454 are N-acetyltransferase; sequence GANLRDPSRI…GWQRPVKIKK (207 aa). 2 residues coordinate UDP-N-acetyl-alpha-D-glucosamine: R330 and K348. Catalysis depends on H360, which acts as the Proton acceptor. The UDP-N-acetyl-alpha-D-glucosamine site is built by Y363 and N374. Residues A377, 383-384, S402, A420, and R437 each bind acetyl-CoA; that span reads NY.

In the N-terminal section; belongs to the N-acetylglucosamine-1-phosphate uridyltransferase family. This sequence in the C-terminal section; belongs to the transferase hexapeptide repeat family. Homotrimer. Requires Mg(2+) as cofactor.

Its subcellular location is the cytoplasm. The enzyme catalyses alpha-D-glucosamine 1-phosphate + acetyl-CoA = N-acetyl-alpha-D-glucosamine 1-phosphate + CoA + H(+). It carries out the reaction N-acetyl-alpha-D-glucosamine 1-phosphate + UTP + H(+) = UDP-N-acetyl-alpha-D-glucosamine + diphosphate. The protein operates within nucleotide-sugar biosynthesis; UDP-N-acetyl-alpha-D-glucosamine biosynthesis; N-acetyl-alpha-D-glucosamine 1-phosphate from alpha-D-glucosamine 6-phosphate (route II): step 2/2. It functions in the pathway nucleotide-sugar biosynthesis; UDP-N-acetyl-alpha-D-glucosamine biosynthesis; UDP-N-acetyl-alpha-D-glucosamine from N-acetyl-alpha-D-glucosamine 1-phosphate: step 1/1. Its pathway is bacterial outer membrane biogenesis; LPS lipid A biosynthesis. Its function is as follows. Catalyzes the last two sequential reactions in the de novo biosynthetic pathway for UDP-N-acetylglucosamine (UDP-GlcNAc). The C-terminal domain catalyzes the transfer of acetyl group from acetyl coenzyme A to glucosamine-1-phosphate (GlcN-1-P) to produce N-acetylglucosamine-1-phosphate (GlcNAc-1-P), which is converted into UDP-GlcNAc by the transfer of uridine 5-monophosphate (from uridine 5-triphosphate), a reaction catalyzed by the N-terminal domain. The polypeptide is Bifunctional protein GlmU (Shewanella sp. (strain MR-4)).